Consider the following 709-residue polypeptide: Golgin-84 (709 aa).

Residues 1 to 664 are Cytoplasmic-facing; sequence MASWLKVAED…RATRFLWRHP (664 aa). 3 disordered regions span residues 24-132, 144-195, and 211-265; these read TELS…VVDR, EVEV…NQDA, and EVIH…DQLE. The segment covering 29–43 has biased composition (low complexity); that stretch reads EQSSPQPSGSSSQEG. Over residues 78-89 the composition is skewed to basic and acidic residues; it reads PPRERIKIEKIR. Residues 94-113 are compositionally biased toward low complexity; sequence VDSSSVDASASKPDVSSSDV. The span at 114–132 shows a compositional bias: basic and acidic residues; sequence KGLDDDGGAEKEEKVVVDR. Over residues 162–180 the composition is skewed to low complexity; it reads DGAADSGNSEGAAESSAPS. Basic and acidic residues-rich tracts occupy residues 211–222 and 248–265; these read EVIHEKNIKEVP and QQEH…DQLE. Positions 287–592 form a coiled coil; the sequence is RVCAGLSSRL…AALEFQLEKS (306 aa). A helical; Signal-anchor for type II membrane protein membrane pass occupies residues 665-684; the sequence is VARVSLLFYLVFVHLFLMYL. Residues 685 to 707 are Lumenal-facing; sequence MHRLQDFASREGPTAMGGLANSD.

Its subcellular location is the golgi apparatus membrane. In terms of biological role, may be involved in maintaining Golgi structure and in intra-Golgi transport. In Oryza sativa subsp. japonica (Rice), this protein is Golgin-84.